A 384-amino-acid chain; its full sequence is Succinyl-diaminopimelate desuccinylase (384 aa).

Zn(2+) is bound at residue histidine 71. The active site involves aspartate 73. A Zn(2+)-binding site is contributed by aspartate 104. Glutamate 138 (proton acceptor) is an active-site residue. Residues glutamate 139, glutamate 167, and histidine 357 each contribute to the Zn(2+) site.

The protein belongs to the peptidase M20A family. DapE subfamily. Homodimer. The cofactor is Zn(2+). It depends on Co(2+) as a cofactor.

It carries out the reaction N-succinyl-(2S,6S)-2,6-diaminopimelate + H2O = (2S,6S)-2,6-diaminopimelate + succinate. Its pathway is amino-acid biosynthesis; L-lysine biosynthesis via DAP pathway; LL-2,6-diaminopimelate from (S)-tetrahydrodipicolinate (succinylase route): step 3/3. Functionally, catalyzes the hydrolysis of N-succinyl-L,L-diaminopimelic acid (SDAP), forming succinate and LL-2,6-diaminopimelate (DAP), an intermediate involved in the bacterial biosynthesis of lysine and meso-diaminopimelic acid, an essential component of bacterial cell walls. The protein is Succinyl-diaminopimelate desuccinylase of Blochmanniella floridana.